The sequence spans 572 residues: Acetyl-coenzyme A synthetase (572 aa).

Threonine 260 provides a ligand contact to CoA. ATP-binding positions include 333-335, 354-359, aspartate 440, and arginine 455; these read GEP and DTWWMT. Serine 463 is a binding site for CoA. Arginine 466 is a binding site for ATP. Residues valine 477, histidine 479, and isoleucine 482 each coordinate Mg(2+). A CoA-binding site is contributed by lysine 524. Position 549 is an N6-acetyllysine (lysine 549).

This sequence belongs to the ATP-dependent AMP-binding enzyme family. Interacts with FloT. The cofactor is Mg(2+). In terms of processing, acetylated. Deacetylation by the SIR2-homolog deacetylase activates the enzyme.

The protein localises to the cell membrane. It localises to the membrane raft. The enzyme catalyses acetate + ATP + CoA = acetyl-CoA + AMP + diphosphate. Its function is as follows. Catalyzes the conversion of acetate into acetyl-CoA (AcCoA), an essential intermediate at the junction of anabolic and catabolic pathways. AcsA undergoes a two-step reaction. In the first half reaction, AcsA combines acetate with ATP to form acetyl-adenylate (AcAMP) intermediate. In the second half reaction, it can then transfer the acetyl group from AcAMP to the sulfhydryl group of CoA, forming the product AcCoA. Has a role in growth and sporulation on acetate. The sequence is that of Acetyl-coenzyme A synthetase (acsA) from Bacillus subtilis (strain 168).